The chain runs to 343 residues: Ribosomal RNA small subunit methyltransferase C (343 aa).

The protein belongs to the methyltransferase superfamily. RsmC family. In terms of assembly, monomer.

The protein resides in the cytoplasm. It catalyses the reaction guanosine(1207) in 16S rRNA + S-adenosyl-L-methionine = N(2)-methylguanosine(1207) in 16S rRNA + S-adenosyl-L-homocysteine + H(+). In terms of biological role, specifically methylates the guanine in position 1207 of 16S rRNA in the 30S particle. The protein is Ribosomal RNA small subunit methyltransferase C of Shigella sonnei (strain Ss046).